We begin with the raw amino-acid sequence, 241 residues long: Chloride intracellular channel protein 1 (241 aa).

Alanine 2 carries the N-acetylalanine modification. A required for insertion into the membrane region spans residues alanine 2–proline 90. Position 13 is an N6-acetyllysine (lysine 13). Residues cysteine 24–serine 27 carry the G-site motif. A disulfide bond links cysteine 24 and cysteine 59. The helical transmembrane segment at phenylalanine 26–valine 46 threads the bilayer. In terms of domain architecture, GST C-terminal spans tyrosine 93–tyrosine 233. N6-acetyllysine is present on lysine 119. The residue at position 121 (serine 121) is a Phosphoserine. Position 131 is an N6-acetyllysine (lysine 131). Phosphoserine occurs at positions 156 and 211. Tyrosine 233 is subject to Phosphotyrosine.

It belongs to the chloride channel CLIC family. As to quaternary structure, monomer. Homodimer (in vitro). Interacts with TRAPPC2. Dimerization requires a conformation change that leads to the exposure of a large hydrophobic surface. In vivo, this may lead to membrane insertion.

Its subcellular location is the nucleus. The protein resides in the nucleus membrane. The protein localises to the cytoplasm. It localises to the cell membrane. It is found in the endoplasmic reticulum. The enzyme catalyses L-dehydroascorbate + 2 glutathione = glutathione disulfide + L-ascorbate. It carries out the reaction chloride(in) = chloride(out). The catalysed reaction is iodide(out) = iodide(in). It catalyses the reaction thiocyanate(in) = thiocyanate(out). The enzyme catalyses nitrate(in) = nitrate(out). It carries out the reaction bromide(in) = bromide(out). The catalysed reaction is fluoride(in) = fluoride(out). In terms of biological role, in the soluble state, catalyzes glutaredoxin-like thiol disulfide exchange reactions with reduced glutathione as electron donor. Reduces selenite and dehydroascorbate and may act as an antioxidant during oxidative stress response. Can insert into membranes and form voltage-dependent multi-ion conductive channels. Membrane insertion seems to be redox-regulated and may occur only under oxidizing conditions. Involved in regulation of the cell cycle. The sequence is that of Chloride intracellular channel protein 1 (CLIC1) from Oryctolagus cuniculus (Rabbit).